The chain runs to 89 residues: uncharacterized protein (89 aa).

A helical transmembrane segment spans residues 67 to 86 (VYLSSMYICFILLAIWMTVW).

Its subcellular location is the membrane. This is an uncharacterized protein from Bacillus subtilis (strain 168).